The sequence spans 470 residues: Argininosuccinate lyase (470 aa).

This sequence belongs to the lyase 1 family. Argininosuccinate lyase subfamily.

The protein localises to the cytoplasm. The catalysed reaction is 2-(N(omega)-L-arginino)succinate = fumarate + L-arginine. It functions in the pathway amino-acid biosynthesis; L-arginine biosynthesis; L-arginine from L-ornithine and carbamoyl phosphate: step 3/3. The sequence is that of Argininosuccinate lyase from Leptospira borgpetersenii serovar Hardjo-bovis (strain L550).